Consider the following 327-residue polypeptide: Microtubule-associated protein RP/EB family member 2 (327 aa).

Positions 1–17 are enriched in polar residues; it reads MPGPTQTLSPNGENNND. Positions 1 to 20 are disordered; it reads MPGPTQTLSPNGENNNDVIH. Positions 56–158 constitute a Calponin-homology (CH) domain; that stretch reads TMSRHDIIAW…FIQWFKKFFD (103 aa). 2 disordered regions span residues 170-238 and 295-327; these read EARQ…DKDL and LYSS…QEEY. The region spanning 234-304 is the EB1 C-terminal domain; sequence SDKDLETQVS…LYSSEEQESH (71 aa).

Belongs to the MAPRE family.

It is found in the cytoplasm. It localises to the cytoskeleton. In terms of biological role, may be involved in microtubule polymerization, and spindle function by stabilizing microtubules and anchoring them at centrosomes. The sequence is that of Microtubule-associated protein RP/EB family member 2 (mapre2) from Xenopus laevis (African clawed frog).